The primary structure comprises 178 residues: MSRIGKKPIEIPDSVDISINNNEVTVKGPKGELSQVVDQSIILEEEEGQLLVKRPTDSNHHKSLHGLSRSLIANMVEGVTNGFERHLEIVGVGYRAQMQGKNLVLNVGYSHPVTIEPPEGVEIEVPKNNQIIVKGTDKEVVGQVAARIRAVRKPEPYKGKGIKYAEEQIIRKVGKTGK.

It belongs to the universal ribosomal protein uL6 family. Part of the 50S ribosomal subunit.

Its function is as follows. This protein binds to the 23S rRNA, and is important in its secondary structure. It is located near the subunit interface in the base of the L7/L12 stalk, and near the tRNA binding site of the peptidyltransferase center. The chain is Large ribosomal subunit protein uL6 from Natranaerobius thermophilus (strain ATCC BAA-1301 / DSM 18059 / JW/NM-WN-LF).